The sequence spans 93 residues: Small ribosomal subunit protein bS16 (93 aa).

Belongs to the bacterial ribosomal protein bS16 family.

This Roseiflexus castenholzii (strain DSM 13941 / HLO8) protein is Small ribosomal subunit protein bS16.